Here is a 577-residue protein sequence, read N- to C-terminus: MKQSKVLIPTKKEAPSDAEALSHKMMIRAGYIYQVSAGVWSYLPLAYRVIRKVENIIRDEMDKAGAVEMLMPGLLPADLWKESGRYESYGDNLFKLKDRRDRDFILGPTHEETFTEVLRDSIKSYKKLPLVVYQLQDKFRDEDRPRYGILRGKEFEMLDGYSFSADQEGLDEAYNNQAKAYRNIFDRIGLNYKVILADSGTMGGKNSQEFSAPAEVGEDIIAYTDGDYAANIEKAESKFTGVQQTAVPAPIEKKATPGAHTVYEAAESLDLDPNQVIKSMLYIAKMSEDEYQPVLVLMRGDDEVNEAKVINALDCEELELATEEDAEKYLNAHPGSLGPVGVGEEVKILADNYVKVLVNMACGANEDGYHYVNANIDRDFRVDQFGDFRNVKEGEIAPDGQPLKFTPGIEIGHIFKLGTHYSSKLGAQVLDSNGRLTDVIMGSYGIGVTRLLSAVAEQNADENGLVWPDSIAPFDVHVIPVNAKKEDQMAMADKIDQQLTEAGYEVLVDDRKERAGVKFADSDLIGIPIRVTVGKKAQDGIVEIKIRKTGETVEVKQEELVNTVGILLKQLNEEKNK.

The protein belongs to the class-II aminoacyl-tRNA synthetase family. ProS type 1 subfamily. In terms of assembly, homodimer.

The protein localises to the cytoplasm. The enzyme catalyses tRNA(Pro) + L-proline + ATP = L-prolyl-tRNA(Pro) + AMP + diphosphate. Its function is as follows. Catalyzes the attachment of proline to tRNA(Pro) in a two-step reaction: proline is first activated by ATP to form Pro-AMP and then transferred to the acceptor end of tRNA(Pro). As ProRS can inadvertently accommodate and process non-cognate amino acids such as alanine and cysteine, to avoid such errors it has two additional distinct editing activities against alanine. One activity is designated as 'pretransfer' editing and involves the tRNA(Pro)-independent hydrolysis of activated Ala-AMP. The other activity is designated 'posttransfer' editing and involves deacylation of mischarged Ala-tRNA(Pro). The misacylated Cys-tRNA(Pro) is not edited by ProRS. This Limosilactobacillus reuteri (strain DSM 20016) (Lactobacillus reuteri) protein is Proline--tRNA ligase.